Consider the following 388-residue polypeptide: MKHLHRFFSSDASGGIILIIAAILAMMMANSGATSGWYHDFLETPVQLRVGSLEINKNMLLWINDALMAVFFLLVGLEVKRELMQGSLASLRQAAFPVIAAIGGMIVPALLYLAFNYADPITREGWAIPAATDIAFALGVLALLGSRVPLALKIFLMALAIIDDLGAIIIIALFYTNDLSMASLGVAAVAIAVLAVLNLCGVRRTGVYILVGVVLWTAVLKSGVHATLAGVIVGFFIPLKEKHGRSTAKRLEHVLHPWVAYLILPLFAFANAGVSLQGVTLDGLTSILPLGIIAGLLIGKPLGISLFCWLALRLKLAHLPEGTTYQQIMAVGILCGIGFTMSIFIASLAFGSVDPELINWAKLGILVGSISSAVIGYSWLRVRLRPSV.

Residues 1–11 (MKHLHRFFSSD) are Cytoplasmic-facing. Residues 12–31 (ASGGIILIIAAILAMMMANS) traverse the membrane as a helical segment. Over 32–58 (GATSGWYHDFLETPVQLRVGSLEINKN) the chain is Periplasmic. Residues 59–80 (MLLWINDALMAVFFLLVGLEVK) traverse the membrane as a helical segment. Residues 81 to 96 (RELMQGSLASLRQAAF) are Cytoplasmic-facing. The helical transmembrane segment at 97 to 116 (PVIAAIGGMIVPALLYLAFN) threads the bilayer. The Periplasmic segment spans residues 117–122 (YADPIT). The chain crosses the membrane as a helical span at residues 123–130 (REGWAIPA). Residues 131–154 (ATDIAFALGVLALLGSRVPLALKI) are Cytoplasmic-facing. A helical membrane pass occupies residues 155-176 (FLMALAIIDDLGAIIIIALFYT). Residues 177–180 (NDLS) lie on the Periplasmic side of the membrane. The chain crosses the membrane as a helical span at residues 181-200 (MASLGVAAVAIAVLAVLNLC). At 201 to 204 (GVRR) the chain is on the cytoplasmic side. The helical transmembrane segment at 205-222 (TGVYILVGVVLWTAVLKS) threads the bilayer. Residue G223 is a topological domain, periplasmic. Residues 224 to 236 (VHATLAGVIVGFF) traverse the membrane as a helical segment. At 237–253 (IPLKEKHGRSTAKRLEH) the chain is on the cytoplasmic side. The chain crosses the membrane as a helical span at residues 254–272 (VLHPWVAYLILPLFAFANA). Topologically, residues 273–286 (GVSLQGVTLDGLTS) are periplasmic. The chain crosses the membrane as a helical span at residues 287-310 (ILPLGIIAGLLIGKPLGISLFCWL). The Cytoplasmic segment spans residues 311 to 339 (ALRLKLAHLPEGTTYQQIMAVGILCGIGF). A helical transmembrane segment spans residues 340 to 350 (TMSIFIASLAF). Over 351–357 (GSVDPEL) the chain is Periplasmic. A helical transmembrane segment spans residues 358 to 380 (INWAKLGILVGSISSAVIGYSWL). Over 381–388 (RVRLRPSV) the chain is Cytoplasmic.

The protein belongs to the NhaA Na(+)/H(+) (TC 2.A.33) antiporter family.

It localises to the cell inner membrane. It catalyses the reaction Na(+)(in) + 2 H(+)(out) = Na(+)(out) + 2 H(+)(in). Functionally, na(+)/H(+) antiporter that extrudes sodium in exchange for external protons. The protein is Na(+)/H(+) antiporter NhaA of Shigella dysenteriae serotype 1 (strain Sd197).